The chain runs to 334 residues: S-adenosylmethionine:tRNA ribosyltransferase-isomerase (334 aa).

This sequence belongs to the QueA family. As to quaternary structure, monomer.

The protein resides in the cytoplasm. It catalyses the reaction 7-aminomethyl-7-carbaguanosine(34) in tRNA + S-adenosyl-L-methionine = epoxyqueuosine(34) in tRNA + adenine + L-methionine + 2 H(+). It functions in the pathway tRNA modification; tRNA-queuosine biosynthesis. Functionally, transfers and isomerizes the ribose moiety from AdoMet to the 7-aminomethyl group of 7-deazaguanine (preQ1-tRNA) to give epoxyqueuosine (oQ-tRNA). The polypeptide is S-adenosylmethionine:tRNA ribosyltransferase-isomerase (Thermosipho melanesiensis (strain DSM 12029 / CIP 104789 / BI429)).